We begin with the raw amino-acid sequence, 867 residues long: Nuclear cap-binding protein subunit 1 (867 aa).

Residues 9–228 (LLRIGDRCPE…DLWERIQVLS (220 aa)) enclose the MIF4G domain. Residues 752 to 797 (SADGDVPNLRAGDPNVNSSARDPEATTMEIDNENGGDNDSQLNGQN) form a disordered region. A compositionally biased stretch (polar residues) spans 788 to 797 (DNDSQLNGQN).

Belongs to the NCBP1 family. As to quaternary structure, component of the nuclear cap-binding complex (CBC), a heterodimer composed of ABH1/CBP80 and CBP20 that interacts with m7GpppG-capped RNA.

The protein localises to the nucleus. The protein resides in the cytoplasm. Component of the cap-binding complex (CBC), which binds cotranscriptionally to the 5'-cap of pre-mRNAs and is involved in various processes such as pre-mRNA splicing and RNA-mediated gene silencing (RNAi) by microRNAs (miRNAs). The CBC complex is involved in miRNA-mediated RNA interference and is required for primary miRNA processing. In the CBC complex, ABH1/CBP80 does not bind directly capped RNAs (m7GpppG-capped RNA) but is required to stabilize the movement of the N-terminal loop of CBP20 and lock the CBC into a high affinity cap-binding state with the cap structure. This Oryza sativa subsp. japonica (Rice) protein is Nuclear cap-binding protein subunit 1 (ABH1).